A 331-amino-acid chain; its full sequence is ADP-L-glycero-D-manno-heptose-6-epimerase (331 aa).

NADP(+) contacts are provided by residues Phe-11–Ile-12, Asp-32–Asn-33, Lys-39, Lys-54, Glu-75–Ser-79, and Asn-92. Tyr-139 serves as the catalytic Proton acceptor. Lys-143 is a binding site for NADP(+). Asn-168 is a substrate binding site. NADP(+) contacts are provided by Val-169 and Lys-177. Lys-177 serves as the catalytic Proton acceptor. Residues Arg-179, His-186, Phe-200–Tyr-203, Arg-213, and Tyr-292 contribute to the substrate site.

Belongs to the NAD(P)-dependent epimerase/dehydratase family. HldD subfamily. In terms of assembly, homopentamer. NADP(+) serves as cofactor.

It carries out the reaction ADP-D-glycero-beta-D-manno-heptose = ADP-L-glycero-beta-D-manno-heptose. It participates in nucleotide-sugar biosynthesis; ADP-L-glycero-beta-D-manno-heptose biosynthesis; ADP-L-glycero-beta-D-manno-heptose from D-glycero-beta-D-manno-heptose 7-phosphate: step 4/4. Catalyzes the interconversion between ADP-D-glycero-beta-D-manno-heptose and ADP-L-glycero-beta-D-manno-heptose via an epimerization at carbon 6 of the heptose. This is ADP-L-glycero-D-manno-heptose-6-epimerase from Cupriavidus metallidurans (strain ATCC 43123 / DSM 2839 / NBRC 102507 / CH34) (Ralstonia metallidurans).